The sequence spans 213 residues: Glutamine amidotransferase-like class 1 domain-containing protein 1 (213 aa).

The signal sequence occupies residues 1 to 20; sequence MTSKPTCLIVASAASAGVSA.

The protein belongs to the peptidase C56 family. As to quaternary structure, homotetramer. Component of the FERRY complex.

The protein resides in the secreted. Its subcellular location is the early endosome. Component of the FERRY complex (Five-subunit Endosomal Rab5 and RNA/ribosome intermediary). The FERRY complex directly interacts with mRNAs and RAB5A, and functions as a RAB5A effector involved in the localization and the distribution of specific mRNAs most likely by mediating their endosomal transport. The complex recruits mRNAs and ribosomes to early endosomes through direct mRNA-interaction. The protein is Glutamine amidotransferase-like class 1 domain-containing protein 1 of Danio rerio (Zebrafish).